Reading from the N-terminus, the 864-residue chain is Calphotin (864 aa).

The leucine-zipper stretch occupies residues 816–858 (LQTTDVSLLAIAATLDAIGEKLKDQKARNQQVMDRLCEIEKIL).

Homodimer. In terms of tissue distribution, soma and axons of photoreceptor cells of compound eyes and ocelli.

The protein resides in the cytoplasm. Functionally, plays important roles in both rhabdomere development and in photoreceptor cell survival. Might function as a calcium-sequestering 'sponge' to regulate the amount of free cytoplasmic calcium. It binds 0.3 mole of Ca(2+) per mole of protein. This is Calphotin (Cpn) from Drosophila melanogaster (Fruit fly).